The primary structure comprises 420 residues: UDP-N-acetylglucosamine 1-carboxyvinyltransferase (420 aa).

22-23 contributes to the phosphoenolpyruvate binding site; that stretch reads KN. Arg92 serves as a coordination point for UDP-N-acetyl-alpha-D-glucosamine. Residue Cys116 is the Proton donor of the active site. Cys116 carries the 2-(S-cysteinyl)pyruvic acid O-phosphothioketal modification. UDP-N-acetyl-alpha-D-glucosamine is bound by residues Asp306 and Ile328.

This sequence belongs to the EPSP synthase family. MurA subfamily.

Its subcellular location is the cytoplasm. The catalysed reaction is phosphoenolpyruvate + UDP-N-acetyl-alpha-D-glucosamine = UDP-N-acetyl-3-O-(1-carboxyvinyl)-alpha-D-glucosamine + phosphate. Its pathway is cell wall biogenesis; peptidoglycan biosynthesis. Functionally, cell wall formation. Adds enolpyruvyl to UDP-N-acetylglucosamine. In Blochmanniella floridana, this protein is UDP-N-acetylglucosamine 1-carboxyvinyltransferase.